The primary structure comprises 267 residues: Glutamate racemase (267 aa).

Residues 10-11 (DS) and 42-43 (YG) contribute to the substrate site. C73 (proton donor/acceptor) is an active-site residue. Substrate is bound at residue 74-75 (NT). C183 functions as the Proton donor/acceptor in the catalytic mechanism. 184 to 185 (TH) contacts substrate.

Belongs to the aspartate/glutamate racemases family.

The enzyme catalyses L-glutamate = D-glutamate. It functions in the pathway cell wall biogenesis; peptidoglycan biosynthesis. Functionally, provides the (R)-glutamate required for cell wall biosynthesis. The sequence is that of Glutamate racemase from Limosilactobacillus reuteri (strain DSM 20016) (Lactobacillus reuteri).